The chain runs to 235 residues: Thiamine import ATP-binding protein ThiQ (235 aa).

Positions 2–230 (LKLIDITWLY…QASASALLGI (229 aa)) constitute an ABC transporter domain. 32 to 39 (GPSGAGKS) contacts ATP.

Belongs to the ABC transporter superfamily. Thiamine importer (TC 3.A.1.19.1) family. In terms of assembly, the complex is composed of two ATP-binding proteins (ThiQ), two transmembrane proteins (ThiP) and a solute-binding protein (ThiB).

Its subcellular location is the cell inner membrane. The catalysed reaction is thiamine(out) + ATP + H2O = thiamine(in) + ADP + phosphate + H(+). Part of the ABC transporter complex ThiBPQ involved in thiamine import. Responsible for energy coupling to the transport system. The sequence is that of Thiamine import ATP-binding protein ThiQ from Salmonella paratyphi A (strain ATCC 9150 / SARB42).